Here is a 321-residue protein sequence, read N- to C-terminus: Hydrolase 3 (321 aa).

The short motif at His-80 to Ala-82 is the Involved in the stabilization of the negatively charged intermediate by the formation of the oxyanion hole element. Active-site residues include Ser-172 and Asp-267.

This sequence belongs to the 'GDXG' lipolytic enzyme family.

It catalyses the reaction dihydroprecondylocarpine acetate + NADPH = (+)-vincadifformine + acetate + NADP(+). It functions in the pathway alkaloid biosynthesis. Its function is as follows. Component of the seco-iridoid and derivatives monoterpenoid indole alkaloids (MIAs, e.g. vincadifformine) biosynthesis pathway. Catalyzes the conversion of O-acetylstemmadenine (OAS) to vincadifformine. May also trigger the formation of additional unknown MIAs. The protein is Hydrolase 3 of Catharanthus roseus (Madagascar periwinkle).